We begin with the raw amino-acid sequence, 406 residues long: Solanesyl diphosphate synthase 1, chloroplastic (406 aa).

The N-terminal 71 residues, 1-71 (MMTSCRNIDL…NGIGQSQTVS (71 aa)), are a transit peptide targeting the chloroplast. Residues K126, R129, and H164 each coordinate isopentenyl diphosphate. Mg(2+) contacts are provided by D171 and D175. Position 180 (R180) interacts with an all-trans-polyprenyl diphosphate. Residue R181 participates in isopentenyl diphosphate binding. Residues K257, T258, Q295, and K312 each contribute to the an all-trans-polyprenyl diphosphate site.

The protein belongs to the FPP/GGPP synthase family. In terms of assembly, homodimer. Interacts with FBN5. Mg(2+) is required as a cofactor. In terms of tissue distribution, higher expression in leaves than in roots.

The protein resides in the plastid. It is found in the chloroplast. The enzyme catalyses 5 isopentenyl diphosphate + (2E,6E,10E)-geranylgeranyl diphosphate = all-trans-nonaprenyl diphosphate + 5 diphosphate. The catalysed reaction is isopentenyl diphosphate + (2E,6E)-farnesyl diphosphate = (2E,6E,10E)-geranylgeranyl diphosphate + diphosphate. In terms of biological role, involved in providing solanesyl diphosphate for plastoquinone-9 (PQ-9) formation in plastids. Catalyzes the elongation of the prenyl side chain of PQ-9 in plastids. Contributes to the biosynthesis of plastochromanol-8 (PC-8) in plastids. Does not contribute to the synthesis of tocopherol or ubiquinone. PQ-9 and PC-8 are lipophilic antioxidants that act as protectant against photooxidative stress under high light stress conditions. Prefers geranylgeranyl diphosphate to farnesyl diphosphate as substrate. No activity with geranyl diphosphate or dimethylallyl diphosphate as substrate. The sequence is that of Solanesyl diphosphate synthase 1, chloroplastic from Arabidopsis thaliana (Mouse-ear cress).